Consider the following 565-residue polypeptide: Adenine deaminase (565 aa).

Belongs to the metallo-dependent hydrolases superfamily. Adenine deaminase family. It depends on Mn(2+) as a cofactor.

It carries out the reaction adenine + H2O + H(+) = hypoxanthine + NH4(+). The sequence is that of Adenine deaminase from Cereibacter sphaeroides (strain ATCC 17025 / ATH 2.4.3) (Rhodobacter sphaeroides).